We begin with the raw amino-acid sequence, 358 residues long: tRNA-specific 2-thiouridylase MnmA (358 aa).

ATP is bound by residues Gly-8–Ser-15 and Met-34. The tract at residues Asn-94–Asp-96 is interaction with target base in tRNA. Residue Cys-99 is the Nucleophile of the active site. A disulfide bond links Cys-99 and Cys-196. Position 123 (Gly-123) interacts with ATP. The segment at Lys-146–Gln-148 is interaction with tRNA. Cys-196 serves as the catalytic Cysteine persulfide intermediate. The interaction with tRNA stretch occupies residues Arg-308–Tyr-309.

Belongs to the MnmA/TRMU family.

It localises to the cytoplasm. It catalyses the reaction S-sulfanyl-L-cysteinyl-[protein] + uridine(34) in tRNA + AH2 + ATP = 2-thiouridine(34) in tRNA + L-cysteinyl-[protein] + A + AMP + diphosphate + H(+). In terms of biological role, catalyzes the 2-thiolation of uridine at the wobble position (U34) of tRNA, leading to the formation of s(2)U34. In Thiobacillus denitrificans (strain ATCC 25259 / T1), this protein is tRNA-specific 2-thiouridylase MnmA.